Reading from the N-terminus, the 505-residue chain is Peroxisome proliferator-activated receptor gamma (505 aa).

The segment at 1-26 (MGETLGDSLIDPESDSFADTLSASTS) is disordered. Over residues 17 to 26 (FADTLSASTS) the composition is skewed to polar residues. Residue Ser-112 is modified to Phosphoserine; by MAPK. The segment at residues 136–210 (AIECRVCGDK…VGMSHNAIRF (75 aa)) is a DNA-binding region (nuclear receptor). NR C4-type zinc fingers lie at residues 139–159 (CRVC…CEGC) and 176–198 (CDLN…FQKC). An interaction with FAM120B region spans residues 205–280 (HNAIRFGRMP…DKSPFVIYDM (76 aa)). Residues 238 to 503 (DLRALAKHLY…HPLLQEIYKD (266 aa)) form the NR LBD domain. Residue Lys-252 forms a Glycyl lysine isopeptide (Lys-Gly) (interchain with G-Cter in ubiquitin) linkage. The short motif at 495–503 (PLLQEIYKD) is the 9aaTAD element.

Belongs to the nuclear hormone receptor family. NR1 subfamily. Interacts with FOXO1 (acetylated form). Heterodimer with other nuclear receptors, such as RXRA. The heterodimer with the retinoic acid receptor RXRA is called adipocyte-specific transcription factor ARF6. Interacts with NCOA6 coactivator, leading to a strong increase in transcription of target genes. Interacts with coactivator PPARBP, leading to a mild increase in transcription of target genes. Interacts with NOCA7 in a ligand-inducible manner. Interacts with NCOA1 and NCOA2 LXXLL motifs. Interacts with ASXL1, ASXL2, DNTTIP2, FAM120B, MAP2K1/MEK1, NR0B2, PDPK1, PRDM16, PRMT2 and TGFB1I1. Interacts (when activated by agonist) with PPP5C. Interacts with HELZ2 and THRAP3; the interaction stimulates the transcriptional activity of PPARG. Interacts with PER2, the interaction is ligand dependent and blocks PPARG recruitment to target promoters. Interacts with NOCT. Interacts with ACTN4. Interacts (when in the liganded conformation) with GPS2. Interacts with CRY1 and CRY2 in a ligand-dependent manner. In the absence of hormonal ligand, interacts with TACC1. In macrophages, interacts with PAQR3 and STUB1; the interactions promote PPARG poylubiquitination and STUB1-mediated degradation. Post-translationally, phosphorylated at basal conditions and dephosphorylated when treated with the ligand. May be dephosphorylated by PPP5C. The phosphorylated form may be inactive and dephosphorylation induces adipogenic activity. In terms of processing, ubiquitinated by E3 ubiquitin-protein ligase complex containing FBXO9; leading to proteasomal degradation. Ubiquitinated at Lys-252 by TRIM55 leading to proteasomal degradation. Ubiquitinated by E3 ubiquitin-protein ligase STUB1/CHIP; leading to proteasomal degradation.

The protein localises to the nucleus. It localises to the cytoplasm. With respect to regulation, PDPK1 activates its transcriptional activity independently of its kinase activity. Nuclear receptor that binds peroxisome proliferators such as hypolipidemic drugs and fatty acids. Once activated by a ligand, the nuclear receptor binds to DNA specific PPAR response elements (PPRE) and modulates the transcription of its target genes, such as acyl-CoA oxidase. It therefore controls the peroxisomal beta-oxidation pathway of fatty acids. Key regulator of adipocyte differentiation and glucose homeostasis. ARF6 acts as a key regulator of the tissue-specific adipocyte P2 (aP2) enhancer. Acts as a critical regulator of gut homeostasis by suppressing NF-kappa-B-mediated pro-inflammatory responses. Plays a role in the regulation of cardiovascular circadian rhythms by regulating the transcription of BMAL1 in the blood vessels. The sequence is that of Peroxisome proliferator-activated receptor gamma (PPARG) from Canis lupus familiaris (Dog).